The chain runs to 131 residues: Protein FAM107B (131 aa).

Ala2 is modified (N-acetylalanine). Disordered stretches follow at residues 39-78 (MNQK…KKKS) and 100-131 (KLQE…AQES). Lys50 is subject to N6-acetyllysine. Positions 52–78 (ELQKVMEKRRRDQVIKQKEEEAQKKKS) are enriched in basic and acidic residues. Residues 61 to 112 (RRDQVIKQKEEEAQKKKSDLEIELLKRQQKLEQLELEKQKLQEEQENAPEFV) are a coiled coil.

The protein belongs to the FAM107 family.

The sequence is that of Protein FAM107B from Rattus norvegicus (Rat).